The following is a 149-amino-acid chain: Probable conjugal transfer protein TrbE part 1 (149 aa).

This sequence belongs to the TrbE/VirB4 family.

The chain is Probable conjugal transfer protein TrbE part 1 (trbEA) from Sinorhizobium fredii (strain NBRC 101917 / NGR234).